We begin with the raw amino-acid sequence, 380 residues long: Hydrogenase maturation factor HypD2 (380 aa).

3 residues coordinate Fe cation: C36, C64, and C67.

Belongs to the HypD family. The cofactor is [4Fe-4S] cluster.

The protein operates within protein modification; [NiFe] hydrogenase maturation. Functionally, involved in the maturation of [NiFe] hydrogenases. Involved in the biosynthesis of the Fe(CN)(2)CO cofactor. In Bradyrhizobium diazoefficiens (strain JCM 10833 / BCRC 13528 / IAM 13628 / NBRC 14792 / USDA 110), this protein is Hydrogenase maturation factor HypD2 (hypD2).